Reading from the N-terminus, the 120-residue chain is Xibalbin-1 (120 aa).

Positions 1-21 (MISKILIAACALLLISHLVLA) are cleaved as a signal peptide. Positions 22–63 (VPYLEDGLNSLHNRTGESDETRGYTIQLLKEMPEDDAVEDYS) are excised as a propeptide. 4 cysteine pairs are disulfide-bonded: Cys79–Cys94, Cys86–Cys99, Cys93–Cys110, and Cys101–Cys108.

The protein belongs to the xibalbin-1 family. Expressed by the venom gland. Not found in the whole body.

The protein localises to the secreted. Its function is as follows. Probable neurotoxin. Strongly inhibits voltage-gated potassium channels (Kv1.1/KCNA1, Kv1.2/KCNA2, Kv1.3/KCNA3, and Kv1.6/KCNA6, with the highest toxicity against Kv1.6 (74% inhibition at 1 uM)) and mildly inhibits sodium channels (Nav1.2/SCN2A, Nav1.4/SCN4A, Nav1.5/SCN5A, Nav1.6/SCN8A, and BgNav). Induces activation of protein kinase A type II (PKA-II) and MAP kinase Erk1/2 in primary nociceptive and non-nociceptive sensory neurons. Does not show cytotoxic activity. Does not have an impact on Ca2+, cAMP, and NO signaling in the cell types analyzed. Does not interfere with the adhesion of leukocytes to endothelial cells. The protein is Xibalbin-1 of Xibalbanus tulumensis (Blind cave remipede).